A 202-amino-acid polypeptide reads, in one-letter code: LexA repressor (202 aa).

The segment at residues 28 to 48 is a DNA-binding region (H-T-H motif); it reads RAEIAQRLGFRSPNAAEEHLK. Active-site for autocatalytic cleavage activity residues include serine 119 and lysine 156.

Belongs to the peptidase S24 family. As to quaternary structure, homodimer.

It carries out the reaction Hydrolysis of Ala-|-Gly bond in repressor LexA.. Its function is as follows. Represses a number of genes involved in the response to DNA damage (SOS response), including recA and lexA. Binds to the 16 bp palindromic sequence 5'-CTGTATATATATACAG-3'. In the presence of single-stranded DNA, RecA interacts with LexA causing an autocatalytic cleavage which disrupts the DNA-binding part of LexA, leading to derepression of the SOS regulon and eventually DNA repair. This is LexA repressor from Edwardsiella ictaluri (strain 93-146).